A 1234-amino-acid polypeptide reads, in one-letter code: DNA-directed RNA polymerase I subunit RPA2 (1234 aa).

A C4-type zinc finger spans residues 1119-1150 (CRQCGSFLSTQPTVSPFIGKRKAVSTVRCRNC).

The protein belongs to the RNA polymerase beta chain family. In terms of assembly, component of the RNA polymerase I (Pol I) complex consisting of 14 subunits.

It localises to the nucleus. The protein localises to the nucleolus. It carries out the reaction RNA(n) + a ribonucleoside 5'-triphosphate = RNA(n+1) + diphosphate. Functionally, DNA-dependent RNA polymerase catalyzes the transcription of DNA into RNA using the four ribonucleoside triphosphates as substrates. Second largest core component of RNA polymerase I which synthesizes ribosomal RNA precursors. Proposed to contribute to the polymerase catalytic activity and forms the polymerase active center together with the largest subunit. Pol I is composed of mobile elements and RPA2 is part of the core element with the central large cleft and probably a clamp element that moves to open and close the cleft. This Neurospora crassa (strain ATCC 24698 / 74-OR23-1A / CBS 708.71 / DSM 1257 / FGSC 987) protein is DNA-directed RNA polymerase I subunit RPA2 (acr-2).